Reading from the N-terminus, the 362-residue chain is E3 ubiquitin-protein ligase TM129 (362 aa).

Topologically, residues 1 to 6 (MDSPEV) are lumenal. A helical transmembrane segment spans residues 7–27 (TFTLAYLVFAVCFVFTPNEFH). Topologically, residues 28-56 (AAGLTVQNLLSGWLGSEDAAFVPFHLRRT) are cytoplasmic. The helical transmembrane segment at 57–77 (AATLLCHSLLPLGYYVGMCLA) threads the bilayer. The Lumenal segment spans residues 78–94 (ASEKRLHALSQAPEAWR). A helical membrane pass occupies residues 95-115 (LFLLLAVTLPSIACILIYYWS). The Cytoplasmic segment spans residues 116–362 (RDRWACHPLA…FCILDVCTVR (247 aa)). The RING-type; degenerate zinc-finger motif lies at 285–350 (CIGCMQTRAS…ASRVPCPTCR (66 aa)).

It belongs to the TMEM129 family. As to quaternary structure, integral component of ER-resident dislocation complexes.

The protein resides in the endoplasmic reticulum membrane. It catalyses the reaction S-ubiquitinyl-[E2 ubiquitin-conjugating enzyme]-L-cysteine + [acceptor protein]-L-lysine = [E2 ubiquitin-conjugating enzyme]-L-cysteine + N(6)-ubiquitinyl-[acceptor protein]-L-lysine.. It participates in protein modification; protein ubiquitination. In terms of biological role, E3 ubiquitin-protein ligase involved in ER-associated protein degradation, preferentially associates with the E2 enzyme UBE2J2. Exploited by viral US11 proteins to mediate HLA class I proteins degradation. This chain is E3 ubiquitin-protein ligase TM129 (TMEM129), found in Homo sapiens (Human).